Here is a 386-residue protein sequence, read N- to C-terminus: Galactokinase (386 aa).

35 to 38 (EHTD) is a binding site for substrate. ATP-binding positions include Ser-69 and 125 to 131 (GAGLSSS). Residues Ser-131 and Glu-163 each contribute to the Mg(2+) site. Asp-175 acts as the Proton acceptor in catalysis. A substrate-binding site is contributed by Tyr-224.

It belongs to the GHMP kinase family. GalK subfamily.

It is found in the cytoplasm. The enzyme catalyses alpha-D-galactose + ATP = alpha-D-galactose 1-phosphate + ADP + H(+). It participates in carbohydrate metabolism; galactose metabolism. In terms of biological role, catalyzes the transfer of the gamma-phosphate of ATP to D-galactose to form alpha-D-galactose-1-phosphate (Gal-1-P). This chain is Galactokinase, found in Vibrio parahaemolyticus serotype O3:K6 (strain RIMD 2210633).